We begin with the raw amino-acid sequence, 230 residues long: Large ribosomal subunit protein uL1 (230 aa).

Belongs to the universal ribosomal protein uL1 family. As to quaternary structure, part of the 50S ribosomal subunit.

Binds directly to 23S rRNA. The L1 stalk is quite mobile in the ribosome, and is involved in E site tRNA release. Functionally, protein L1 is also a translational repressor protein, it controls the translation of the L11 operon by binding to its mRNA. This is Large ribosomal subunit protein uL1 from Metamycoplasma arthritidis (strain 158L3-1) (Mycoplasma arthritidis).